The sequence spans 633 residues: UvrABC system protein C (633 aa).

In terms of domain architecture, GIY-YIG spans 37 to 115; sequence PKPGVYRMFG…IKSLKPRFNI (79 aa). The UVR domain maps to 225–260; that stretch reads NALREDLQTRMAQASEAMDFETAAKLRDRIRAIAAV.

This sequence belongs to the UvrC family. In terms of assembly, interacts with UvrB in an incision complex.

The protein resides in the cytoplasm. Its function is as follows. The UvrABC repair system catalyzes the recognition and processing of DNA lesions. UvrC both incises the 5' and 3' sides of the lesion. The N-terminal half is responsible for the 3' incision and the C-terminal half is responsible for the 5' incision. In Maricaulis maris (strain MCS10) (Caulobacter maris), this protein is UvrABC system protein C.